A 188-amino-acid polypeptide reads, in one-letter code: Diphosphoinositol polyphosphate phosphohydrolase DDP1 (188 aa).

Residues 1–21 (MGKTADNHGPVRSETAREGRE) show a composition bias toward basic and acidic residues. Positions 1–23 (MGKTADNHGPVRSETAREGRENQ) are disordered. One can recognise a Nudix hydrolase domain in the interval 30 to 179 (GARLVAGCIC…KRPELLEALN (150 aa)). 1D-myo-inositol hexakisphosphate contacts are provided by R32, S52, S53, and K63. Positions 32, 52, 53, and 63 each coordinate 5-diphospho-1D-myo-inositol 1,2,3,4,6-pentakisphosphate. P(1),P(5)-bis(5'-adenosyl) pentaphosphate-binding residues include R32, S52, S53, and K63. Mg(2+) contacts are provided by K63, E80, and E84. The Nudix box signature appears at 65–86 (GVEKDEPNYETTAQRETWEEAG). D100 lines the P(1),P(5)-bis(5'-adenosyl) pentaphosphate pocket. The 1D-myo-inositol hexakisphosphate site is built by R102, R129, R152, and R171. 5-diphospho-1D-myo-inositol 1,2,3,4,6-pentakisphosphate is bound at residue R102. Positions 152 and 171 each coordinate 5-diphospho-1D-myo-inositol 1,2,3,4,6-pentakisphosphate. The P(1),P(5)-bis(5'-adenosyl) pentaphosphate site is built by R152, R171, and E173.

Belongs to the Nudix hydrolase family. DIPP subfamily. It depends on Mg(2+) as a cofactor. Requires Mn(2+) as cofactor. Zn(2+) serves as cofactor.

The protein resides in the cytoplasm. It localises to the nucleus. The catalysed reaction is diphospho-myo-inositol polyphosphate + H2O = myo-inositol polyphosphate + phosphate.. It catalyses the reaction P(1),P(6)-bis(5'-adenosyl) hexaphosphate + H2O = adenosine 5'-pentaphosphate + AMP + 2 H(+). It carries out the reaction P(1),P(5)-bis(5'-adenosyl) pentaphosphate + H2O = adenosine 5'-tetraphosphate + AMP + 2 H(+). The enzyme catalyses [phosphate](n+1) + n H2O = (n+1) phosphate + n H(+). In terms of biological role, may eliminate potentially toxic dinucleoside polyphosphates during sporulation. Most active against diadenosine 5',5'''-P1,P6-hexaphosphate (Ap6A). Can also hydrolyze diadenosine 5',5'''-P1,P5-pentaphosphate (Ap5A), adenosine 5'-pentaphosphate (p5A), and adenosine 5'-tetraphosphate (p4A) are also substrates, but not diadenosine 5',5'''-P1,P4-tetraphosphate (Ap4A) or other dinucleotides, mononucleotides, nucleotide sugars, or nucleotide alcohols. Also cleaves a beta-phosphate from the diphosphate groups in PP-InsP5 (diphosphoinositol pentakisphosphate) and [PP]2-InsP4 (bisdiphosphoinositol tetrakisphosphate). Also has endopolyphosphatase activity. The polypeptide is Diphosphoinositol polyphosphate phosphohydrolase DDP1 (DDP1) (Saccharomyces cerevisiae (strain ATCC 204508 / S288c) (Baker's yeast)).